The primary structure comprises 57 residues: UPF0391 membrane protein Nham_2738 (57 aa).

A run of 2 helical transmembrane segments spans residues 4–24 and 30–50; these read WVVT…GGLA and IAKI…VVGL.

The protein belongs to the UPF0391 family.

The protein localises to the cell membrane. The sequence is that of UPF0391 membrane protein Nham_2738 from Nitrobacter hamburgensis (strain DSM 10229 / NCIMB 13809 / X14).